The sequence spans 299 residues: Sulfate adenylyltransferase subunit 2 (299 aa).

This sequence belongs to the PAPS reductase family. CysD subfamily. Sulfate-activating enzymes, NodP and NodQ, may be physically associated.

The catalysed reaction is sulfate + ATP + H(+) = adenosine 5'-phosphosulfate + diphosphate. Functionally, proposed to provide activated sulfate for transfer to nod factor. The sequence is that of Sulfate adenylyltransferase subunit 2 (nodP) from Rhizobium sp. (strain BR816).